Consider the following 580-residue polypeptide: Trafficking protein particle complex subunit 14 (580 aa).

Disordered stretches follow at residues 95-134 (GSAG…TSGG) and 480-533 (VSHP…RSGS). The segment covering 105 to 116 (PGGGDPGGGGLF) has biased composition (gly residues). Position 491 is a phosphoserine (serine 491). Residues 492 to 502 (RKSSPSSPAVR) show a composition bias toward low complexity. Residues 512 to 525 (LGRSQSFSHQQPSR) show a composition bias toward polar residues. Serine 517 is subject to Phosphoserine. Threonine 541 is subject to Phosphothreonine. A Phosphoserine modification is found at serine 546.

In terms of assembly, component of the multisubunit TRAPP II complex, which includes at least TRAPPC1, TRAPPC2, TRAPPC2L, TRAPPC3, TRAPPC4, TRAPPC5, TRAPPC6A/B, TRAPPC9, TRAPPC10 and TRAPPC14. TRAPPC9, TRAPPC10 and TRAPPC14 are specific subunits of the TRAPP II complex. Interacts with alpha-tubulin during mitosis. Interacts with RAB3IP (via the N-terminal region); this interaction mediates RAB3IP association with the TRAPP II complex. Interacts with TRAPPC10. Interacts with FBF1.

It is found in the cytoplasm. It localises to the cytoskeleton. The protein localises to the spindle. The protein resides in the vesicle. Its subcellular location is the midbody. In terms of biological role, specific subunit of the TRAPP (transport protein particle) II complex, a highly conserved vesicle tethering complex that functions in late Golgi trafficking as a membrane tether. TRAPPC14 is dispensable for TRAPPII complex integrity but mediates RAB3IP preciliary vesicle trafficking to the mother centriole during ciliogenesis. Modulates YAP1 activity as transcriptional regulator. The polypeptide is Trafficking protein particle complex subunit 14 (Mus musculus (Mouse)).